The primary structure comprises 448 residues: Na(+)-translocating NADH-quinone reductase subunit A (448 aa).

Belongs to the NqrA family. Composed of six subunits; NqrA, NqrB, NqrC, NqrD, NqrE and NqrF.

It carries out the reaction a ubiquinone + n Na(+)(in) + NADH + H(+) = a ubiquinol + n Na(+)(out) + NAD(+). Its function is as follows. NQR complex catalyzes the reduction of ubiquinone-1 to ubiquinol by two successive reactions, coupled with the transport of Na(+) ions from the cytoplasm to the periplasm. NqrA to NqrE are probably involved in the second step, the conversion of ubisemiquinone to ubiquinol. This is Na(+)-translocating NADH-quinone reductase subunit A from Alcanivorax borkumensis (strain ATCC 700651 / DSM 11573 / NCIMB 13689 / SK2).